Here is a 236-residue protein sequence, read N- to C-terminus: Small ribosomal subunit protein uS3 (236 aa).

The KH type-2 domain occupies 39-107 (IRLYVLEELK…ETSLNIVEIH (69 aa)).

It belongs to the universal ribosomal protein uS3 family. As to quaternary structure, part of the 30S ribosomal subunit. Forms a tight complex with proteins S10 and S14.

In terms of biological role, binds the lower part of the 30S subunit head. Binds mRNA in the 70S ribosome, positioning it for translation. The sequence is that of Small ribosomal subunit protein uS3 from Bartonella quintana (strain Toulouse) (Rochalimaea quintana).